Here is a 259-residue protein sequence, read N- to C-terminus: uncharacterized protein (259 aa).

Residues 158–187 are a coiled coil; sequence VELHLKIIEEDMKETTKKNKEKKQNSQSQE. Over residues 172-181 the composition is skewed to basic and acidic residues; sequence TTKKNKEKKQ. Disordered stretches follow at residues 172–197 and 217–240; these read TTKK…MEVS and PVKK…QLSK. Low complexity-rich tracts occupy residues 182-193 and 217-226; these read NSQSQEISNSIE and PVKKTSSASK.

This is an uncharacterized protein from Acanthamoeba polyphaga mimivirus (APMV).